Here is a 348-residue protein sequence, read N- to C-terminus: Sorbitol dehydrogenase (348 aa).

Residues Cys-40, His-65, and Glu-66 each contribute to the Zn(2+) site. Residues Ile-179, Asp-199, Arg-204, 269–271 (VGI), and 293–295 (SFR) contribute to the NAD(+) site. Arg-295 serves as a coordination point for substrate.

It belongs to the zinc-containing alcohol dehydrogenase family. Homotetramer. It depends on Zn(2+) as a cofactor.

The enzyme catalyses xylitol + NAD(+) = D-xylulose + NADH + H(+). The catalysed reaction is L-iditol + NAD(+) = keto-L-sorbose + NADH + H(+). It catalyses the reaction keto-D-fructose + NADH + H(+) = D-sorbitol + NAD(+). In terms of biological role, polyol dehydrogenase that catalyzes the reversible NAD(+)-dependent oxidation of various sugar alcohols. Is active with xylitol, L-iditol and D-sorbitol (D-glucitol) as substrates, leading to the C2-oxidized products D-xylulose, L-sorbose and D-fructose, respectively. Is a key enzyme in the polyol pathway that interconverts glucose and fructose via sorbitol, which constitutes an important alternate route for glucose metabolism. This Bombyx mori (Silk moth) protein is Sorbitol dehydrogenase (SDH).